Here is a 690-residue protein sequence, read N- to C-terminus: Elongation factor G (690 aa).

The tr-type G domain occupies 8 to 283 (EDYRNFGIMA…AVVDYLPSPV (276 aa)). Residues 17–24 (AHIDAGKT), 81–85 (DTPGH), and 135–138 (NKMD) contribute to the GTP site.

The protein belongs to the TRAFAC class translation factor GTPase superfamily. Classic translation factor GTPase family. EF-G/EF-2 subfamily.

The protein localises to the cytoplasm. Catalyzes the GTP-dependent ribosomal translocation step during translation elongation. During this step, the ribosome changes from the pre-translocational (PRE) to the post-translocational (POST) state as the newly formed A-site-bound peptidyl-tRNA and P-site-bound deacylated tRNA move to the P and E sites, respectively. Catalyzes the coordinated movement of the two tRNA molecules, the mRNA and conformational changes in the ribosome. The chain is Elongation factor G from Rhodopseudomonas palustris (strain BisB5).